Reading from the N-terminus, the 102-residue chain is Mini zinc finger protein 1 (102 aa).

Over residues 1–13 (MMKKRQMVIKQRS) the composition is skewed to basic residues. The disordered stretch occupies residues 1 to 34 (MMKKRQMVIKQRSRNSNTSSSWTTTSSSSSSSEI). A compositionally biased stretch (low complexity) spans 14-32 (RNSNTSSSWTTTSSSSSSS). The ZF-HD dimerization-type; degenerate zinc finger occupies 39–88 (YVECQKNHAANIGGYAVDGCREFMAAGVEGTVDALRCAACGCHRNFHRKE).

In terms of assembly, homo- and heterodimers. Interacts with ZHD1, ZHD5, ZHD6, ZHD7, ZHD8, ZHD10 and ZHD13. As to expression, mostly expressed in roots and stems, present in siliques and seedlings, and weakly observed in petioles, leaves and flowers.

The protein localises to the cytoplasm. In terms of biological role, inhibits zinc finger homeodomain (ZHD) transcription factors, such as ZHD5, by interacting with them to prevent both their nuclear localization and their DNA-binding properties. Involved in integrating signals from multiple hormones by preventing the expression of genes involved in gibberellic acid (GA), auxin and brassinosteroid signaling and by promoting the expression of abscisic acid (ABA)-responsive genes. Regulates several development aspects, including photomorphogenesis, apical dominance, longevity, flower morphology and fertility, as well as root and stem elongation. Promotes the formation of ectopic shoot meristems on leaf margins. This is Mini zinc finger protein 1 (MIF1) from Arabidopsis thaliana (Mouse-ear cress).